The sequence spans 264 residues: Thymidylate synthase (264 aa).

DUMP is bound at residue Arg-21. His-51 contributes to the (6R)-5,10-methylene-5,6,7,8-tetrahydrofolate binding site. 126–127 (RR) is a dUMP binding site. Cys-146 acts as the Nucleophile in catalysis. DUMP is bound by residues 166-169 (RSCD), Asn-177, and 207-209 (HLY). Position 169 (Asp-169) interacts with (6R)-5,10-methylene-5,6,7,8-tetrahydrofolate. Ala-263 provides a ligand contact to (6R)-5,10-methylene-5,6,7,8-tetrahydrofolate.

The protein belongs to the thymidylate synthase family. Bacterial-type ThyA subfamily. As to quaternary structure, homodimer.

The protein localises to the cytoplasm. The enzyme catalyses dUMP + (6R)-5,10-methylene-5,6,7,8-tetrahydrofolate = 7,8-dihydrofolate + dTMP. The protein operates within pyrimidine metabolism; dTTP biosynthesis. In terms of biological role, catalyzes the reductive methylation of 2'-deoxyuridine-5'-monophosphate (dUMP) to 2'-deoxythymidine-5'-monophosphate (dTMP) while utilizing 5,10-methylenetetrahydrofolate (mTHF) as the methyl donor and reductant in the reaction, yielding dihydrofolate (DHF) as a by-product. This enzymatic reaction provides an intracellular de novo source of dTMP, an essential precursor for DNA biosynthesis. This is Thymidylate synthase from Shewanella baltica (strain OS155 / ATCC BAA-1091).